We begin with the raw amino-acid sequence, 2415 residues long: Bradyzoite-formation deficient protein 1 (2415 aa).

3 disordered regions span residues 369–392 (WNKPEAARQEYHRASASARGPEET), 418–481 (HLTS…PYTR), and 761–845 (DGCG…QDTQ). The segment covering 419-429 (LTSRQHPNPRP) has biased composition (basic residues). Over residues 430 to 443 (RMKEEHCGREREVL) the composition is skewed to basic and acidic residues. Composition is skewed to polar residues over residues 444-460 (SSEQPSDCGETQKTPAS) and 832-843 (PRTTSSSSYGQD). The region spanning 921 to 968 (WSAEEDASLAELVSRKGFKWALISSQLTGAFGIPRTGKQCRERWFNHV) is the Myb-like domain. The HTH myb-type domain occupies 969-1023 (NPEVKKGDWSAEEDAMILMLQNELGNRWATIAKKLRGRTENAVKNRFISLSNARL). A DNA-binding region (H-T-H motif) is located at residues 996-1019 (WATIAKKLRGRTENAVKNRFISLS). Disordered stretches follow at residues 1027-1050 (RPKRDGSSADCFSNRRTGSGKSSG), 1098-1127 (VSRPRQCTGTSPSCGHPSAGEGDPSHLKNT), 1206-1270 (NDER…NGLD), 1319-1343 (PACDHRGAPQNSVESGEQSPDAQRQ), 1501-1521 (QLWTSQETESDTNPSPNQQHE), 1905-1932 (VSRDKQREPPKNGLTGCDVPEYLGTSQS), 1959-2013 (RVRW…GSTA), and 2161-2222 (GTDA…EMQD). The span at 1036 to 1050 (DCFSNRRTGSGKSSG) shows a compositional bias: polar residues. The span at 1227 to 1237 (AHEHADIARSD) shows a compositional bias: basic and acidic residues. Polar residues-rich tracts occupy residues 1327 to 1343 (PQNSVESGEQSPDAQRQ) and 1501 to 1520 (QLWTSQETESDTNPSPNQQH). Over residues 1974-1985 (SVSSGASNSATT) the composition is skewed to polar residues. A compositionally biased stretch (basic and acidic residues) spans 2181–2197 (QAHRRDGHDMQRVQRCD).

It is found in the nucleus. Its function is as follows. Master transcription factor that controls the differentiation of acute-stage tachyzoite parasites into chronic-stage bradyzoites, which form intracellular cysts resistant to immune clearance and existing therapies. Sufficient to drive differentiation into bradyzoite stage. Following translation in response to stress conditions, binds to the promoter of many chronic stage-specific genes and promotes their expression, thereby driving differentiation into bradyzoites. This Toxoplasma gondii (strain ATCC 50611 / Me49) protein is Bradyzoite-formation deficient protein 1.